Reading from the N-terminus, the 492-residue chain is Trypanothione reductase (492 aa).

35-52 (DVQTHHGPPHYAALGGTC) serves as a coordination point for FAD. Cysteine 52 and cysteine 57 form a disulfide bridge. Histidine 461 serves as the catalytic Proton acceptor.

This sequence belongs to the class-I pyridine nucleotide-disulfide oxidoreductase family. Homodimer. Requires FAD as cofactor.

It localises to the cytoplasm. It carries out the reaction trypanothione + NADP(+) = trypanothione disulfide + NADPH + H(+). Trypanothione is the parasite analog of glutathione; this enzyme is the equivalent of glutathione reductase. The sequence is that of Trypanothione reductase (TPR) from Trypanosoma brucei brucei.